A 428-amino-acid polypeptide reads, in one-letter code: 3-phosphoshikimate 1-carboxyvinyltransferase (428 aa).

Residues Lys21, Ser22, and Arg26 each coordinate 3-phosphoshikimate. Lys21 provides a ligand contact to phosphoenolpyruvate. Residues Gly91 and Arg119 each contribute to the phosphoenolpyruvate site. Residues Ser164, Gln166, Asp313, and Lys340 each contribute to the 3-phosphoshikimate site. A phosphoenolpyruvate-binding site is contributed by Gln166. The Proton acceptor role is filled by Asp313. Positions 344 and 386 each coordinate phosphoenolpyruvate.

Belongs to the EPSP synthase family. As to quaternary structure, monomer.

The protein localises to the cytoplasm. The catalysed reaction is 3-phosphoshikimate + phosphoenolpyruvate = 5-O-(1-carboxyvinyl)-3-phosphoshikimate + phosphate. Its pathway is metabolic intermediate biosynthesis; chorismate biosynthesis; chorismate from D-erythrose 4-phosphate and phosphoenolpyruvate: step 6/7. Catalyzes the transfer of the enolpyruvyl moiety of phosphoenolpyruvate (PEP) to the 5-hydroxyl of shikimate-3-phosphate (S3P) to produce enolpyruvyl shikimate-3-phosphate and inorganic phosphate. This chain is 3-phosphoshikimate 1-carboxyvinyltransferase, found in Campylobacter jejuni subsp. jejuni serotype O:6 (strain 81116 / NCTC 11828).